Reading from the N-terminus, the 992-residue chain is MTKRIRQPIIAVLGHVDHGKCLLPDEKVVVPSVGFVTLKELFETASKVVERDDEKEIRELDERITSVNGDGKTGLVKASYVWKVRHKGKVIRVKLKNWHGVTVTPEHPFLTTKGWKRADQLRPGDYVAVPRFIHGNEDEKIFLSYVKVKKSGEEWKEYFYLAGRKGNIDVNLLFVAPKRYVVEFLRGYFEERSEVKGESVIVEARELVEPLSLALLRFGIFSKIQGSKLIVTGKRNLEAFKDYIGFKDEREKALEEAIEKVKGSEVYPIFEEIRRLRLLFGFTREELGSYAKYENSEAPTYEELMEILDFIERGSPSLSKKIAILEGKLKAELRVLEEEGLIKDGKLTPLGRELLEVWRNREFDSKDVDYIRNIAETLVFIPVENVEEEEYDGYVYDLTTETHNFIANGILVHNTTLLDRIRKTNVAAKEAGGITQHIGATEVPIEVVKKIAGPLIKLWKAEIKLPGLLFIDTPGHEAFTSLRARGGSLADLAVLVVDINEGFQPQTIESIEILRKYRTPFVVAANKIDRIKGWVIEEDEPFLMNIKKQDQRAVQELETKLWELIGKFYEFGFQANRFDRVQNFTRELAIVPISAKYGIGIAELLVLIAGLSQRYLEEKLKIEVEGPARGTILEVREEPGLGHTIDVIIYDGTLHKDDTIVVGGKDKAIVTKIRALLKPKPLDEIRDPRFRFDYVDEVTAAAGVKIAAPGLEEALAGSPVIAAPTPEDVEKAKQEILEQIERVVISTDKVGVIVKADTLGSLEALSKELQEKEIPIRKADVGNVSKTDVMEALSVKEEEPKYGVILGFNVKVNEDAEEVAKAKDVKIFVGNVIYKLIEDYEEWVKEEEEKKKRELLSKVTFPGVIRLYPDERYVFRRSNPAIVGIEVIEGRIKPGVTLIKQNGQKVGVIRSIKSRDEFLQEAKKGQAVAIAIEGAIVGRHIHPGETLYVDLSRDDAITLLKHLRDTLEDTDIKALKMIAKVKAKEDPFWRAI.

The DOD-type homing endonuclease domain occupies 96–220 (KNWHGVTVTP…LSLALLRFGI (125 aa)). Residues 399-616 (TTETHNFIAN…LIAGLSQRYL (218 aa)) form the tr-type G domain. GTP-binding positions include 472-476 (DTPGH) and 526-529 (NKID).

The protein belongs to the TRAFAC class translation factor GTPase superfamily. Classic translation factor GTPase family. IF-2 subfamily. Post-translationally, this protein undergoes a protein self splicing that involves a post-translational excision of the intervening region (intein) followed by peptide ligation.

Functionally, function in general translation initiation by promoting the binding of the formylmethionine-tRNA to ribosomes. Seems to function along with eIF-2. This Pyrococcus abyssi (strain GE5 / Orsay) protein is Probable translation initiation factor IF-2 (infB).